A 160-amino-acid polypeptide reads, in one-letter code: Small ribosomal subunit protein uS7 (160 aa).

Belongs to the universal ribosomal protein uS7 family. Part of the 30S ribosomal subunit. Contacts proteins S9 and S11.

One of the primary rRNA binding proteins, it binds directly to 16S rRNA where it nucleates assembly of the head domain of the 30S subunit. Is located at the subunit interface close to the decoding center, probably blocks exit of the E-site tRNA. The protein is Small ribosomal subunit protein uS7 of Ehrlichia chaffeensis (strain ATCC CRL-10679 / Arkansas).